A 177-amino-acid polypeptide reads, in one-letter code: Ureidoglycolate lyase (177 aa).

The protein belongs to the ureidoglycolate lyase family. As to quaternary structure, homodimer. Requires Ni(2+) as cofactor.

The catalysed reaction is (S)-ureidoglycolate = urea + glyoxylate. It functions in the pathway nitrogen metabolism; (S)-allantoin degradation. Functionally, catalyzes the catabolism of the allantoin degradation intermediate (S)-ureidoglycolate, generating urea and glyoxylate. Involved in the utilization of allantoin as nitrogen source. The protein is Ureidoglycolate lyase of Burkholderia cepacia (Pseudomonas cepacia).